The primary structure comprises 422 residues: Solute carrier family 35 member D3 (422 aa).

The next 10 membrane-spanning stretches (helical) occupy residues 9-29 (VLGI…NILL), 38-58 (FSFL…SLEL), 64-84 (LIAV…VAVL), 103-123 (MYVV…VLVL), 131-151 (GVLA…AGDL), 155-175 (PIGY…LVLI), 187-207 (LTAQ…CSFA), 224-244 (AMVS…FTTL), 257-277 (FVGV…FSDV), and 280-300 (TSLF…YCVA). A disordered region spans residues 339–365 (AKSGNSEPESAEGAGDSVQQGGQESRG). A compositionally biased stretch (polar residues) spans 355–364 (SVQQGGQESR).

Belongs to the TPT transporter family. SLC35D subfamily. As to quaternary structure, could interact with ATG14, BECN1 and PIK3C3 that form the PI3KC3-C1/AIC/autophagy initiation complex; enhancing the formation of the AIC and promoting autophagy. In terms of tissue distribution, expressed in brain. Expressed in subsets of dopaminergic neurons. Expressed in maturing megakaryocytes.

The protein localises to the cytoplasmic vesicle. The protein resides in the secretory vesicle. Its subcellular location is the synaptic vesicle membrane. It is found in the early endosome membrane. It localises to the endoplasmic reticulum membrane. The catalysed reaction is UDP-alpha-D-glucose(in) = UDP-alpha-D-glucose(out). Its activity is regulated as follows. Inhibited by proton uncouplers that directly abolish the proton electrochemical gradient. In terms of biological role, probable UDP-glucose transmembrane transporter involved in UDP-glucose transport from the cytosol to the lumen of synaptic vesicles. It is involved in platelet dense granules maturation. Functionally, alternatively, could function as a molecular adapter enhancing the formation of the PI3KC3-C1/AIC/autophagy initiation complex to promote autophagy in dopaminergic neurons. Could also regulate the plasma membrane localization of the D(1A) dopamine receptor/DRD1 and dopamine signaling. This is Solute carrier family 35 member D3 from Mus musculus (Mouse).